We begin with the raw amino-acid sequence, 456 residues long: UDP-N-acetylmuramate--L-alanine ligase (456 aa).

114-120 (GTHGKTT) is an ATP binding site.

The protein belongs to the MurCDEF family.

It localises to the cytoplasm. It catalyses the reaction UDP-N-acetyl-alpha-D-muramate + L-alanine + ATP = UDP-N-acetyl-alpha-D-muramoyl-L-alanine + ADP + phosphate + H(+). The protein operates within cell wall biogenesis; peptidoglycan biosynthesis. In terms of biological role, cell wall formation. This is UDP-N-acetylmuramate--L-alanine ligase from Porphyromonas gingivalis (strain ATCC 33277 / DSM 20709 / CIP 103683 / JCM 12257 / NCTC 11834 / 2561).